A 698-amino-acid polypeptide reads, in one-letter code: Transcription factor cwo (698 aa).

The tract at residues 62-75 (QDPLSHRIIEKRRR) is basic motif; degenerate. The region spanning 62-117 (QDPLSHRIIEKRRRDRMNSCLADLSRLIPPQYQRKGRGRIEKTEIIEMAIRHLKHL) is the bHLH domain. Residues 76–117 (DRMNSCLADLSRLIPPQYQRKGRGRIEKTEIIEMAIRHLKHL) are helix-loop-helix motif. Residues 128-159 (YRSGYMDCMKEAAKFLYDVHMQDFCHRLLGRL) enclose the Orange domain. Disordered regions lie at residues 257–319 (SSPA…ASST) and 349–369 (STAPHHHHHHTDSSHHDFESS). Low complexity predominate over residues 280–318 (APPAADNVPSNSTGSGSAAACAGGNSNSSGSNSSNAASS). The span at 359–369 (TDSSHHDFESS) shows a compositional bias: basic and acidic residues.

In terms of tissue distribution, expressed in adult brain where it is detected in the dorsal lateral neurons, small and large ventral lateral neurons and dorsal neurons 1, 2 and 3 (at protein level). Expressed at constant levels in a 12 hour light / 12 hour day cycle (at protein level). Strongly expressed in pacemaker neurons. In adults, mRNA expression oscillates in a circadian manner with a peak at around 14 hour Zeitgeber time. mRNA levels oscillate in a rhythmic manner in both 12 hour light / 12 hour dark and constant dark conditions with a morning peak around the time of lights-on and an evening peak around the time of lights-off in light/dark conditions. During stage 8 of embryonic development, expressed in the anterior and posterior midgut primordia and expression in the gut continues throughout embryonic development. During germ band retraction, expression is initiated in many tissues in a prominent segmentally repeated pattern. Later, expression is ubiquitous but has higher levels in segmentally repeated clusters of cells. Expression is also found in cells of the amnioserosa, in the head region, in posterior spiracles and in tracheal trees.

The protein resides in the nucleus. Plays a role in the regulation of circadian rhythms. Transcriptional repressor which inhibits Clock-mediated transcriptional activation by binding to E boxes in the promoters of Clock target genes and repressing their transcription. E box binding activity is time-dependent with higher binding activity seen in the early morning (zeitgeber time 2) than early evening (zeitgeber time 14) and is dependent on the presence of the circadian protein per. It is likely that per binds to Clock-cycle heterodimers, reducing their affinity for E box binding and allowing cwo to bind instead. Negatively regulates its own expression. This is Transcription factor cwo from Drosophila melanogaster (Fruit fly).